A 148-amino-acid chain; its full sequence is Lysozyme C (148 aa).

Residues 1–18 (MKALIVLGLVLLSVMVQG) form the signal peptide. One can recognise a C-type lysozyme domain in the interval 19–148 (KVFERCELAR…VRQYVQGCGV (130 aa)). 4 disulfides stabilise this stretch: cysteine 24/cysteine 146, cysteine 48/cysteine 134, cysteine 83/cysteine 99, and cysteine 95/cysteine 113. Active-site residues include glutamate 53 and aspartate 71.

It belongs to the glycosyl hydrolase 22 family. Monomer.

The enzyme catalyses Hydrolysis of (1-&gt;4)-beta-linkages between N-acetylmuramic acid and N-acetyl-D-glucosamine residues in a peptidoglycan and between N-acetyl-D-glucosamine residues in chitodextrins.. Its function is as follows. Lysozymes have primarily a bacteriolytic function; those in tissues and body fluids are associated with the monocyte-macrophage system and enhance the activity of immunoagents. The protein is Lysozyme C (LYZ) of Gorilla gorilla gorilla (Western lowland gorilla).